A 353-amino-acid polypeptide reads, in one-letter code: MPPPQRFRVQSKNYFLTYPRCTIPKEEALSQLQKIHTTTNKKFIKVCEERHDNGEPHLHALIQFEGKFICTNKRLFDLVSTTRSAHFHPNIQGAKSSSDVKEYIDKDGVTIEWGQFQVDGRSARGGQQSANDSYAKALNADSIESALTILKEEQPKDYVLQNHNIRSNLERIFFKVPEPWVPPFPLSSFVNIPVVMQDWVDDYFGRGSAARPERPISIIVEGDSRTGKTMWARALGPHNYLSGHLDFNSRVYSNSVEYNVIDDISPNYLKLKHWKELIGAQKDWQSNCKYGKPVQIKGGIPSIVLCNPGEGSSYKDFLNKEENRALHNWTIHNAIFVTLTAPLYQSTAQDCQT.

The region spanning 8 to 116 (RVQSKNYFLT…DGVTIEWGQF (109 aa)) is the CRESS-DNA virus Rep endonuclease domain. The RCR-1 signature appears at 15–18 (FLTY). The a divalent metal cation site is built by glutamate 49, histidine 57, and histidine 59. Residues 57–59 (HLH) carry the RCR-2 motif. The active-site For DNA cleavage activity is the tyrosine 103. The short motif at 103–106 (YIDK) is the RCR-3 element. Aspartate 107 contributes to the a divalent metal cation binding site. The binding to RBR1 stretch occupies residues 143–153 (IESALTILKEE). The tract at residues 156 to 176 (KDYVLQNHNIRSNLERIFFKV) is oligomerization. 222–229 (GDSRTGKT) serves as a coordination point for ATP.

This sequence belongs to the geminiviridae Rep protein family. Homooligomer. Interacts with the replication enhancer protein (REn). Interacts with host retinoblastoma-related protein 1 (RBR1), and may thereby induce the transcription of host replicative enzymes even if the cell is not dividing anymore. Interacts with host PCNA. Interacts with host SCE1 protein. Binds to host RAD54 protein to ensure geminiviral replication. Requires Mg(2+) as cofactor. Mn(2+) is required as a cofactor.

It localises to the host nucleus. Functionally, essential for the replication of viral ssDNA. The closed circular ssDNA genome is first converted to a superhelical dsDNA. Rep binds a specific region at the genome origin of replication. It introduces an endonucleolytic nick within the conserved sequence 5'-TAATATTAC-3' in the intergenic region of the genome present in all geminiviruses, thereby initiating the rolling circle replication (RCR). Following cleavage, binds covalently to the 5'-phosphate of DNA as a tyrosyl ester. The cleavage gives rise to a free 3'-OH that serves as a primer for the cellular DNA polymerase. The polymerase synthesizes the (+) strand DNA by rolling circle mechanism. After one round of replication, a Rep-catalyzed nucleotidyl transfer reaction releases a circular single-stranded virus genome, thereby terminating the replication. Displays origin-specific DNA cleavage, nucleotidyl transferase, ATPase and helicase activities. The sequence is that of Replication-associated protein from Macroptilium lathyroides (Lima bean).